The primary structure comprises 395 residues: ATP phosphoribosyltransferase regulatory subunit (395 aa).

The protein belongs to the class-II aminoacyl-tRNA synthetase family. HisZ subfamily. As to quaternary structure, heteromultimer composed of HisG and HisZ subunits.

Its subcellular location is the cytoplasm. The protein operates within amino-acid biosynthesis; L-histidine biosynthesis; L-histidine from 5-phospho-alpha-D-ribose 1-diphosphate: step 1/9. Required for the first step of histidine biosynthesis. May allow the feedback regulation of ATP phosphoribosyltransferase activity by histidine. The sequence is that of ATP phosphoribosyltransferase regulatory subunit from Azotobacter vinelandii (strain DJ / ATCC BAA-1303).